The following is a 67-amino-acid chain: Large ribosomal subunit protein bL35 (67 aa).

The interval 1–20 (MPKLKTKSGAKKRFVPKKSG) is disordered.

It belongs to the bacterial ribosomal protein bL35 family.

The sequence is that of Large ribosomal subunit protein bL35 from Anaeromyxobacter dehalogenans (strain 2CP-1 / ATCC BAA-258).